The chain runs to 394 residues: Elongation factor Tu (394 aa).

The tr-type G domain maps to 10–204 (KPHVNVGTIG…ALDSYIPEPQ (195 aa)). Residues 19-26 (GHVDHGKT) are G1. Position 19–26 (19–26 (GHVDHGKT)) interacts with GTP. Thr-26 is a binding site for Mg(2+). Residues 60–64 (GITIN) are G2. Residues 81–84 (DCPG) form a G3 region. GTP-binding positions include 81 to 85 (DCPGH) and 136 to 139 (NKCD). The G4 stretch occupies residues 136–139 (NKCD). The segment at 174–176 (SAL) is G5.

It belongs to the TRAFAC class translation factor GTPase superfamily. Classic translation factor GTPase family. EF-Tu/EF-1A subfamily. Monomer.

It localises to the cytoplasm. The catalysed reaction is GTP + H2O = GDP + phosphate + H(+). Functionally, GTP hydrolase that promotes the GTP-dependent binding of aminoacyl-tRNA to the A-site of ribosomes during protein biosynthesis. The protein is Elongation factor Tu of Shewanella putrefaciens (Pseudomonas putrefaciens).